A 98-amino-acid chain; its full sequence is Cytochrome b (98 aa).

3 helical membrane-spanning segments follow: residues 1–18, 42–63, and 78–98; these read LLGL…FLAM, WLIR…YLHV, and WNIG…GYVL. H48 and H62 together coordinate heme b.

It belongs to the cytochrome b family. As to quaternary structure, the cytochrome bc1 complex contains 3 respiratory subunits (MT-CYB, CYC1 and UQCRFS1), 2 core proteins (UQCRC1 and UQCRC2) and probably 6 low-molecular weight proteins. Requires heme b as cofactor.

It is found in the mitochondrion inner membrane. Component of the ubiquinol-cytochrome c reductase complex (complex III or cytochrome b-c1 complex) that is part of the mitochondrial respiratory chain. The b-c1 complex mediates electron transfer from ubiquinol to cytochrome c. Contributes to the generation of a proton gradient across the mitochondrial membrane that is then used for ATP synthesis. This chain is Cytochrome b (mt-cyb), found in Scaphirhynchus platorynchus (Shovelnose sturgeon).